We begin with the raw amino-acid sequence, 696 residues long: UvrABC system protein B (696 aa).

Residues glutamate 46–arginine 433 enclose the Helicase ATP-binding domain. Residue glycine 59–threonine 66 participates in ATP binding. The Beta-hairpin motif lies at tyrosine 112–isoleucine 135. The region spanning glutamine 450 to isoleucine 616 is the Helicase C-terminal domain. The region spanning alanine 647–arginine 682 is the UVR domain.

The protein belongs to the UvrB family. As to quaternary structure, forms a heterotetramer with UvrA during the search for lesions. Interacts with UvrC in an incision complex.

The protein localises to the cytoplasm. Its function is as follows. The UvrABC repair system catalyzes the recognition and processing of DNA lesions. A damage recognition complex composed of 2 UvrA and 2 UvrB subunits scans DNA for abnormalities. Upon binding of the UvrA(2)B(2) complex to a putative damaged site, the DNA wraps around one UvrB monomer. DNA wrap is dependent on ATP binding by UvrB and probably causes local melting of the DNA helix, facilitating insertion of UvrB beta-hairpin between the DNA strands. Then UvrB probes one DNA strand for the presence of a lesion. If a lesion is found the UvrA subunits dissociate and the UvrB-DNA preincision complex is formed. This complex is subsequently bound by UvrC and the second UvrB is released. If no lesion is found, the DNA wraps around the other UvrB subunit that will check the other stand for damage. This is UvrABC system protein B from Burkholderia mallei (strain ATCC 23344).